The primary structure comprises 424 residues: 2,3-bisphosphoglycerate-independent phosphoglycerate mutase (424 aa).

Belongs to the BPG-independent phosphoglycerate mutase family. A-PGAM subfamily.

The enzyme catalyses (2R)-2-phosphoglycerate = (2R)-3-phosphoglycerate. It functions in the pathway carbohydrate degradation; glycolysis; pyruvate from D-glyceraldehyde 3-phosphate: step 3/5. Its function is as follows. Catalyzes the interconversion of 2-phosphoglycerate and 3-phosphoglycerate. The polypeptide is 2,3-bisphosphoglycerate-independent phosphoglycerate mutase (Aeropyrum pernix (strain ATCC 700893 / DSM 11879 / JCM 9820 / NBRC 100138 / K1)).